Reading from the N-terminus, the 375-residue chain is Aminomethyltransferase (375 aa).

The protein belongs to the GcvT family. In terms of assembly, the glycine cleavage system is composed of four proteins: P, T, L and H.

It catalyses the reaction N(6)-[(R)-S(8)-aminomethyldihydrolipoyl]-L-lysyl-[protein] + (6S)-5,6,7,8-tetrahydrofolate = N(6)-[(R)-dihydrolipoyl]-L-lysyl-[protein] + (6R)-5,10-methylene-5,6,7,8-tetrahydrofolate + NH4(+). Its function is as follows. The glycine cleavage system catalyzes the degradation of glycine. This chain is Aminomethyltransferase, found in Cupriavidus metallidurans (strain ATCC 43123 / DSM 2839 / NBRC 102507 / CH34) (Ralstonia metallidurans).